The chain runs to 149 residues: SsrA-binding protein (149 aa).

The segment at 121-149 (GKGEHDKRDTIKDREGKREVERAMKSRSR) is disordered.

The protein belongs to the SmpB family.

The protein resides in the cytoplasm. Its function is as follows. Required for rescue of stalled ribosomes mediated by trans-translation. Binds to transfer-messenger RNA (tmRNA), required for stable association of tmRNA with ribosomes. tmRNA and SmpB together mimic tRNA shape, replacing the anticodon stem-loop with SmpB. tmRNA is encoded by the ssrA gene; the 2 termini fold to resemble tRNA(Ala) and it encodes a 'tag peptide', a short internal open reading frame. During trans-translation Ala-aminoacylated tmRNA acts like a tRNA, entering the A-site of stalled ribosomes, displacing the stalled mRNA. The ribosome then switches to translate the ORF on the tmRNA; the nascent peptide is terminated with the 'tag peptide' encoded by the tmRNA and targeted for degradation. The ribosome is freed to recommence translation, which seems to be the essential function of trans-translation. The protein is SsrA-binding protein of Polaromonas sp. (strain JS666 / ATCC BAA-500).